The chain runs to 218 residues: Host range factor 1 (218 aa).

In terms of biological role, facilitates AcMNPV replication in two non-permissive cell lines, IPLB-Ld652Y and IPLB-LdFB. In Lepidoptera (butterflies and moths), this protein is Host range factor 1 (HRF-1).